We begin with the raw amino-acid sequence, 506 residues long: Maturase K (506 aa).

This sequence belongs to the intron maturase 2 family. MatK subfamily.

The protein resides in the plastid. The protein localises to the chloroplast. Its function is as follows. Usually encoded in the trnK tRNA gene intron. Probably assists in splicing its own and other chloroplast group II introns. This is Maturase K from Pisum sativum (Garden pea).